We begin with the raw amino-acid sequence, 100 residues long: MAKKSMIARDVKRKKLVERYATKRKKLLDEFNSAKDPMERLEIHRKIQALPRNSAPSRMRNRCWATGKPRGVYRDFGLCRNQLRERAHKGELPGVVKSSW.

It belongs to the universal ribosomal protein uS14 family. Part of the 30S ribosomal subunit. Contacts proteins S3 and S10.

In terms of biological role, binds 16S rRNA, required for the assembly of 30S particles and may also be responsible for determining the conformation of the 16S rRNA at the A site. The polypeptide is Small ribosomal subunit protein uS14 (Prochlorococcus marinus (strain MIT 9211)).